The following is a 465-amino-acid chain: 3-isopropylmalate dehydratase large subunit (465 aa).

The [4Fe-4S] cluster site is built by Cys-347, Cys-407, and Cys-410. Residues 416-443 are disordered; that stretch reads DTLRPGERSASTSNRNFEGRQGPGGRTH.

Belongs to the aconitase/IPM isomerase family. LeuC type 1 subfamily. Heterodimer of LeuC and LeuD. [4Fe-4S] cluster serves as cofactor.

The catalysed reaction is (2R,3S)-3-isopropylmalate = (2S)-2-isopropylmalate. It participates in amino-acid biosynthesis; L-leucine biosynthesis; L-leucine from 3-methyl-2-oxobutanoate: step 2/4. Its function is as follows. Catalyzes the isomerization between 2-isopropylmalate and 3-isopropylmalate, via the formation of 2-isopropylmaleate. In Frankia casuarinae (strain DSM 45818 / CECT 9043 / HFP020203 / CcI3), this protein is 3-isopropylmalate dehydratase large subunit.